The primary structure comprises 99 residues: uncharacterized protein (99 aa).

A helical membrane pass occupies residues 10–29; that stretch reads ELSVHTGTVTHTIFVYVFLG.

It is found in the membrane. This is an uncharacterized protein from Schizosaccharomyces pombe (strain 972 / ATCC 24843) (Fission yeast).